The following is a 253-amino-acid chain: Small ribosomal subunit protein uS3 (253 aa).

Residues 21–92 (LNEFLTRELA…SVELYAEKVA (72 aa)) enclose the KH type-2 domain. The tract at residues 211-253 (VEPKDEILPTTPISEQKGGKPDPQVPQQPPQQPPAMPPPVPTA) is disordered. The segment covering 233–253 (PQVPQQPPQQPPAMPPPVPTA) has biased composition (pro residues).

It belongs to the universal ribosomal protein uS3 family.

Its subcellular location is the cytoplasm. It is found in the nucleus. The protein resides in the nucleolus. It localises to the mitochondrion inner membrane. The protein localises to the cytoskeleton. Its subcellular location is the spindle. The catalysed reaction is 2'-deoxyribonucleotide-(2'-deoxyribose 5'-phosphate)-2'-deoxyribonucleotide-DNA = a 3'-end 2'-deoxyribonucleotide-(2,3-dehydro-2,3-deoxyribose 5'-phosphate)-DNA + a 5'-end 5'-phospho-2'-deoxyribonucleoside-DNA + H(+). Functionally, component of the small ribosomal subunit. The ribosome is a large ribonucleoprotein complex responsible for the synthesis of proteins in the cell. Has endonuclease activity and plays a role in repair of damaged DNA. Also involved in other processes including regulation of transcription, translation of its cognate mRNA, spindle formation and chromosome movement during mitosis, and apoptosis. The chain is Small ribosomal subunit protein uS3 (RPS3) from Ambystoma mexicanum (Axolotl).